Here is a 250-residue protein sequence, read N- to C-terminus: Ribosomal RNA small subunit methyltransferase J (250 aa).

S-adenosyl-L-methionine-binding positions include 101–102 (RD), 117–118 (ER), 153–154 (SS), and Asp-171.

This sequence belongs to the methyltransferase superfamily. RsmJ family.

It localises to the cytoplasm. The enzyme catalyses guanosine(1516) in 16S rRNA + S-adenosyl-L-methionine = N(2)-methylguanosine(1516) in 16S rRNA + S-adenosyl-L-homocysteine + H(+). Its function is as follows. Specifically methylates the guanosine in position 1516 of 16S rRNA. The sequence is that of Ribosomal RNA small subunit methyltransferase J from Shigella dysenteriae serotype 1 (strain Sd197).